The chain runs to 322 residues: Acetyl-coenzyme A carboxylase carboxyl transferase subunit beta (322 aa).

The 270-residue stretch at 24 to 293 folds into the CoA carboxyltransferase N-terminal domain; that stretch reads LWIKCPDTGQ…PAVEEIAASD (270 aa).

Belongs to the AccD/PCCB family. In terms of assembly, acetyl-CoA carboxylase is a heterohexamer composed of biotin carboxyl carrier protein (AccB), biotin carboxylase (AccC) and two subunits each of ACCase subunit alpha (AccA) and ACCase subunit beta (AccD).

The protein localises to the cytoplasm. It catalyses the reaction N(6)-carboxybiotinyl-L-lysyl-[protein] + acetyl-CoA = N(6)-biotinyl-L-lysyl-[protein] + malonyl-CoA. Its pathway is lipid metabolism; malonyl-CoA biosynthesis; malonyl-CoA from acetyl-CoA: step 1/1. In terms of biological role, component of the acetyl coenzyme A carboxylase (ACC) complex. Biotin carboxylase (BC) catalyzes the carboxylation of biotin on its carrier protein (BCCP) and then the CO(2) group is transferred by the transcarboxylase to acetyl-CoA to form malonyl-CoA. The protein is Acetyl-coenzyme A carboxylase carboxyl transferase subunit beta of Rhodopseudomonas palustris (strain BisB5).